A 375-amino-acid polypeptide reads, in one-letter code: Putrescine N-methyltransferase 1 (375 aa).

2 stretches are compositionally biased toward polar residues: residues 24–50 (HQNGTSEHLNGYQNGTSKHQNGHQNGT) and 57–77 (HQNGTSEQQNGTISHDNGNEL). The disordered stretch occupies residues 24 to 77 (HQNGTSEHLNGYQNGTSKHQNGHQNGTFEHRNGHQNGTSEQQNGTISHDNGNEL). Residues 86–323 (PGWFSEFSAL…GVIGYMLCST (238 aa)) enclose the PABS domain. S-adenosyl-L-methionine is bound by residues Gln-117, Glu-192, and 223-224 (DG). The active-site Proton acceptor is Asp-242. Tyr-311 lines the S-adenosyl-L-methionine pocket.

The protein belongs to the class I-like SAM-binding methyltransferase superfamily. Putrescine methyltransferase family. As to expression, predominantly expressed in roots.

It carries out the reaction putrescine + S-adenosyl-L-methionine = N-methylputrescine + S-adenosyl-L-homocysteine + H(+). It functions in the pathway alkaloid biosynthesis; nicotine biosynthesis. Functionally, involved in the biosynthesis of pyridine alkaloid natural products, leading mainly to the production of anabasine, anatabine, nicotine and nornicotine, effective deterrents against herbivores with antiparasitic and pesticide properties (neurotoxins); nornicotine serves as the precursor in the synthesis of the carcinogen compound N'-nitrosonornicotine (NNN). Methyltransferase that mediates the conversion of putrescine to N-methylputrescine. Promotes leaves ripening. The polypeptide is Putrescine N-methyltransferase 1 (Nicotiana tabacum (Common tobacco)).